We begin with the raw amino-acid sequence, 190 residues long: MTYEIQASVREAQGTGASRRLRREGQIPGILYGEGQEPVAIAVDHKTVFYALEKESFHTALIKLSLNGETKDVIVRDFQMHPFRREVQHIDFQAVKADQPVRIRVPLHIVNAENSQAVKLQGGRVSLLNTTVEVVALPANIPAFLDLDCAEVVAGDILHLSDIKLPEGVESVSLKRNENLAVATVTGKKR.

It belongs to the bacterial ribosomal protein bL25 family. CTC subfamily. As to quaternary structure, part of the 50S ribosomal subunit; part of the 5S rRNA/L5/L18/L25 subcomplex. Contacts the 5S rRNA. Binds to the 5S rRNA independently of L5 and L18.

In terms of biological role, this is one of the proteins that binds to the 5S RNA in the ribosome where it forms part of the central protuberance. The sequence is that of Large ribosomal subunit protein bL25 from Neisseria meningitidis serogroup A / serotype 4A (strain DSM 15465 / Z2491).